Reading from the N-terminus, the 118-residue chain is MARIAGVNIPDHKHAVISLTYVFGIGKTTAKQICAATGVAESTKISALDDAKMDEIRAEVAKHTVEGDLRREISMNIKRLMDLGCYRGLRHRRSLPVRGQRSKTNARTRKGPRKPIKK.

The interval 93-118 (RSLPVRGQRSKTNARTRKGPRKPIKK) is disordered.

Belongs to the universal ribosomal protein uS13 family. As to quaternary structure, part of the 30S ribosomal subunit. Forms a loose heterodimer with protein S19. Forms two bridges to the 50S subunit in the 70S ribosome.

Functionally, located at the top of the head of the 30S subunit, it contacts several helices of the 16S rRNA. In the 70S ribosome it contacts the 23S rRNA (bridge B1a) and protein L5 of the 50S subunit (bridge B1b), connecting the 2 subunits; these bridges are implicated in subunit movement. Contacts the tRNAs in the A and P-sites. The protein is Small ribosomal subunit protein uS13 of Teredinibacter turnerae (strain ATCC 39867 / T7901).